Reading from the N-terminus, the 298-residue chain is Arginase (298 aa).

The Mn(2+) site is built by histidine 98, aspartate 121, histidine 123, and aspartate 125. Residues 123-127 (HGDLN), 134-136 (SGN), and aspartate 177 each bind substrate. The Mn(2+) site is built by aspartate 225 and aspartate 227. Substrate-binding residues include threonine 239 and glutamate 270.

It belongs to the arginase family. Mn(2+) is required as a cofactor.

It carries out the reaction L-arginine + H2O = urea + L-ornithine. It functions in the pathway nitrogen metabolism; urea cycle; L-ornithine and urea from L-arginine: step 1/1. The sequence is that of Arginase (rocF) from Brevibacillus brevis (Bacillus brevis).